The sequence spans 300 residues: 4-hydroxy-tetrahydrodipicolinate synthase (300 aa).

Pyruvate is bound at residue Thr-55. The active-site Proton donor/acceptor is the Tyr-143. Catalysis depends on Lys-171, which acts as the Schiff-base intermediate with substrate. Pyruvate is bound at residue Ile-211.

Belongs to the DapA family. As to quaternary structure, homotetramer; dimer of dimers.

The protein localises to the cytoplasm. It carries out the reaction L-aspartate 4-semialdehyde + pyruvate = (2S,4S)-4-hydroxy-2,3,4,5-tetrahydrodipicolinate + H2O + H(+). The protein operates within amino-acid biosynthesis; L-lysine biosynthesis via DAP pathway; (S)-tetrahydrodipicolinate from L-aspartate: step 3/4. Functionally, catalyzes the condensation of (S)-aspartate-beta-semialdehyde [(S)-ASA] and pyruvate to 4-hydroxy-tetrahydrodipicolinate (HTPA). This Mycobacterium bovis (strain ATCC BAA-935 / AF2122/97) protein is 4-hydroxy-tetrahydrodipicolinate synthase.